A 324-amino-acid polypeptide reads, in one-letter code: Germination protease (324 aa).

The propeptide occupies 1–10 (MIIVLGIRTD).

Belongs to the peptidase A25 family. As to quaternary structure, homotetramer. Autoproteolytically processed. The inactive tetrameric zymogen termed p46 autoprocesses to a smaller form termed p41, which is active only during spore germination.

The catalysed reaction is Endopeptidase action with P4 Glu or Asp, P1 preferably Glu &gt; Asp, P1' hydrophobic and P2' Ala.. Initiates the rapid degradation of small, acid-soluble proteins during spore germination. The protein is Germination protease of Caldanaerobacter subterraneus subsp. tengcongensis (strain DSM 15242 / JCM 11007 / NBRC 100824 / MB4) (Thermoanaerobacter tengcongensis).